The primary structure comprises 90 residues: uncharacterized protein (90 aa).

The first 20 residues, 1 to 20 (MAYKMLQVVLCSTLLIGALG), serve as a signal peptide directing secretion.

This is an uncharacterized protein from Homo sapiens (Human).